Consider the following 305-residue polypeptide: U6 small nuclear RNA (adenine-(43)-N(6))-methyltransferase (305 aa).

Residues Arg-87, Gly-112, Glu-135, Thr-166, and Asn-188 each contribute to the S-adenosyl-L-methionine site. The tract at residues 197–221 (PNPLGGNTRNPERRPAPNNARTGSQ) is disordered.

The protein belongs to the methyltransferase superfamily. METTL16/RlmF family.

It carries out the reaction adenosine in U6 snRNA + S-adenosyl-L-methionine = N(6)-methyladenosine in U6 snRNA + S-adenosyl-L-homocysteine + H(+). In terms of biological role, RNA N6-methyltransferase that mediates N6-methylation of adenine of U6 small nuclear RNA (U6 snRNA). This Drosophila melanogaster (Fruit fly) protein is U6 small nuclear RNA (adenine-(43)-N(6))-methyltransferase.